Here is a 213-residue protein sequence, read N- to C-terminus: Ras-related protein Rab-39B (213 aa).

GTP contacts are provided by Ser17, Gly20, Lys21, Ser22, Cys23, Ser37, and Thr40. Residue Ser22 coordinates Mg(2+). A switch-I region spans residues 35–43 (QVSDPTVGV). Mg(2+) contacts are provided by Thr40 and Asp64. Positions 67, 123, 124, 126, 154, and 155 each coordinate GTP. The interval 67–83 (GQERFRSITRAYYRNSV) is switch-II. At Ser201 the chain carries Phosphoserine. S-geranylgeranyl cysteine attachment occurs at residues Cys211 and Cys213. Cys213 carries the post-translational modification Cysteine methyl ester.

Belongs to the small GTPase superfamily. Rab family. As to quaternary structure, interacts (GDP-bound) with C9orf72; C9orf72 in complex with SMCR8 acts as a GEF for RAB39B. Interacts (in GTP-bound form) with PICK1 (via PDZ domain); a PICK1 homodimer may allow simultaneous association of RAB39B and GRIA2 to PICK1 which is involved in GRIA2 trafficking. Interacts with isoform c of RASSF1; the interaction is strong. Interacts with isoform a of RASSF1; the interaction is weak. Interacts with the DLG4/PSD-95. Interacts (GTP-bound) with HOPS complex components VPS39 and VPS41. It depends on Mg(2+) as a cofactor. As to expression, specifically expressed in neuron and neuronal precursors in the brain. Expression is high in all regions of the brain with highest levels observed in the hippocampus.

It is found in the cell membrane. The protein localises to the cytoplasmic vesicle membrane. It localises to the golgi apparatus. The protein resides in the cytoplasmic vesicle. Its subcellular location is the autophagosome membrane. It is found in the autolysosome membrane. It catalyses the reaction GTP + H2O = GDP + phosphate + H(+). With respect to regulation, regulated by guanine nucleotide exchange factors (GEFs) including C9orf72-SMCR8 complex, which promote the exchange of bound GDP for free GTP. Regulated by GTPase activating proteins (GAPs) which increase the GTP hydrolysis activity. Inhibited by GDP dissociation inhibitors (GDIs). Functionally, the small GTPases Rab are key regulators of intracellular membrane trafficking, from the formation of transport vesicles to their fusion with membranes. Rabs cycle between an inactive GDP-bound form and an active GTP-bound form that is able to recruit to membranes different sets of downstream effectors directly responsible for vesicle formation, movement, tethering and fusion. RAB39B is involved in autophagy and may function in autophagosome formation. Binds downstream effector PICK1 to ensure selectively GRIA2 exit from the endoplasmic reticulum to the Golgi and to regulate AMPAR composition at the post-synapses and thus synaptic transmission. May regulate the homeostasis of SNCA/alpha-synuclein. The chain is Ras-related protein Rab-39B from Mus musculus (Mouse).